A 220-amino-acid polypeptide reads, in one-letter code: Glycerol-3-phosphate acyltransferase (220 aa).

The next 6 membrane-spanning stretches (helical) occupy residues 11-31, 70-90, 96-116, 127-147, 153-173, and 193-213; these read INVI…GYAL, LLVL…SKLF, LQWM…FLNF, GSVV…WFFV, ISSL…FFVP, and MVLI…NLLA.

Belongs to the PlsY family. As to quaternary structure, probably interacts with PlsX.

The protein localises to the cell inner membrane. It carries out the reaction an acyl phosphate + sn-glycerol 3-phosphate = a 1-acyl-sn-glycero-3-phosphate + phosphate. It participates in lipid metabolism; phospholipid metabolism. Catalyzes the transfer of an acyl group from acyl-phosphate (acyl-PO(4)) to glycerol-3-phosphate (G3P) to form lysophosphatidic acid (LPA). This enzyme utilizes acyl-phosphate as fatty acyl donor, but not acyl-CoA or acyl-ACP. This Helicobacter pylori (strain ATCC 700392 / 26695) (Campylobacter pylori) protein is Glycerol-3-phosphate acyltransferase.